A 574-amino-acid chain; its full sequence is Aspartate--tRNA ligase (574 aa).

Glutamate 169 contributes to the L-aspartate binding site. Residues 193–196 (QLFK) are aspartate. Residue arginine 215 participates in L-aspartate binding. ATP contacts are provided by residues 215 to 217 (RDE) and glutamine 224. Histidine 437 lines the L-aspartate pocket. Glutamate 471 contacts ATP. Arginine 478 serves as a coordination point for L-aspartate. Residue 523–526 (GLDR) participates in ATP binding.

Belongs to the class-II aminoacyl-tRNA synthetase family. Type 1 subfamily. Homodimer.

It is found in the cytoplasm. The catalysed reaction is tRNA(Asp) + L-aspartate + ATP = L-aspartyl-tRNA(Asp) + AMP + diphosphate. In terms of biological role, catalyzes the attachment of L-aspartate to tRNA(Asp) in a two-step reaction: L-aspartate is first activated by ATP to form Asp-AMP and then transferred to the acceptor end of tRNA(Asp). The chain is Aspartate--tRNA ligase from Mycoplasma mycoides subsp. mycoides SC (strain CCUG 32753 / NCTC 10114 / PG1).